Consider the following 308-residue polypeptide: Palmitoyltransferase ZDHHC7 (308 aa).

At 1–50 the chain is on the cytoplasmic side; it reads MQPSGHRLRDIEHHPLLTDNDNYDSASSSSSETDMADRVWFIRDGCGMVC. A helical membrane pass occupies residues 51–71; the sequence is AVMTWLLVVYADFVVTFVMLL. The Lumenal segment spans residues 72–75; the sequence is PSKD. A helical transmembrane segment spans residues 76 to 96; sequence FWYSVVNGVLFNCLAVLALSS. Topologically, residues 97–173 are cytoplasmic; that stretch reads HLRTMLTDPG…NNCVGEKNQR (77 aa). The region spanning 130-180 is the DHHC domain; the sequence is YKCPKCCCIKPERAHHCSICKRCIRKMDHHCPWVNNCVGEKNQRFFVLFTM. Catalysis depends on cysteine 160, which acts as the S-palmitoyl cysteine intermediate. Residues 174 to 194 form a helical membrane-spanning segment; that stretch reads FFVLFTMYIALSSVHALILCG. The Lumenal segment spans residues 195-217; that stretch reads LQFISCVRGQWTECSDFSPPITV. Residues 218–238 traverse the membrane as a helical segment; that stretch reads ILLVFLCLEGLLFFTFTAVMF. Over 239 to 308 the chain is Cytoplasmic; it reads GTQIHSICND…TRKGGPEFSV (70 aa).

It belongs to the DHHC palmitoyltransferase family. In terms of assembly, homooligomers. Heterooligomers with ZDHHC3. Post-translationally, autopalmitoylated. As to expression, ubiquitously expressed, with highest levels in liver, kidney and brain. Expressed in all brain regions.

Its subcellular location is the golgi apparatus membrane. It catalyses the reaction L-cysteinyl-[protein] + hexadecanoyl-CoA = S-hexadecanoyl-L-cysteinyl-[protein] + CoA. It carries out the reaction L-cysteinyl-[protein] + tetradecanoyl-CoA = S-tetradecanoyl-L-cysteinyl-[protein] + CoA. The catalysed reaction is L-cysteinyl-[protein] + octadecanoyl-CoA = S-octadecanoyl-L-cysteinyl-[protein] + CoA. Functionally, golgi-localized palmitoyltransferase that catalyzes the addition of palmitate onto various protein substrates and therefore functions in several unrelated biological processes. Has no stringent fatty acid selectivity and in addition to palmitate can also transfer onto target proteins myristate from tetradecanoyl-CoA and stearate from octadecanoyl-CoA. Palmitoylates sex steroid hormone receptors, including ESR1, PGR and AR, thereby regulating their targeting to the plasma membrane and their function in rapid intracellular signaling upon binding of sex hormones. Palmitoylates GNAQ, a heterotrimeric G protein, regulating its dynamic localization at the plasma membrane and is thereby involved in GNAQ-dependent G protein-coupled receptor signaling pathways. Also functions in ligand-induced cell death by regulating the FAS signaling pathway through the palmitoylation and stabilization of the receptor at the plasma membrane. In epithelial cells, palmitoylates SCRIB and regulates its localization to the plasma membrane, regulating indirectly cell polarity and differentiation. Also palmitoylates JAM3 and promotes its expression at tight junctions and regulates its function in cell migration. Palmitoylates the glucose transporter GLUT4/SLC2A4 and controls the insulin-dependent translocation of GLUT4 to the plasma membrane. In brain, could also palmitoylate SNAP25 and DLG4/PSD95. Could also palmitoylate DNAJC5 and regulate its localization to the Golgi membrane. Could also palmitoylate NCDN. May play a role in follicle stimulation hormone (FSH) activation of testicular Sertoli cells. Activates pyroptosis by catalyzing palmitoylation of gasdermin-D (GSDMD). The chain is Palmitoyltransferase ZDHHC7 from Mus musculus (Mouse).